The following is an 863-amino-acid chain: Facilitated trehalose transporter Tret1 (863 aa).

The disordered stretch occupies residues Met-1–Thr-208. Residues Met-1–Tyr-398 lie on the Cytoplasmic side of the membrane. Residues Lys-28–Glu-46 are compositionally biased toward basic and acidic residues. Residues Ser-47–Asp-59 show a composition bias toward polar residues. Residues Ala-72 to Leu-85 show a composition bias toward low complexity. Composition is skewed to polar residues over residues Pro-114–Gly-129 and Lys-177–Ala-187. A phosphoserine mark is found at Ser-254, Ser-255, and Ser-256. Positions Val-286–Ile-307 are disordered. Phosphoserine occurs at positions 326 and 328. The tract at residues Phe-332–Arg-354 is disordered. The span at Arg-336–Thr-347 shows a compositional bias: polar residues. A helical membrane pass occupies residues Ile-399–Ala-419. Over Ser-420–Ser-446 the chain is Extracellular. A glycan (N-linked (GlcNAc...) asparagine) is linked at Asn-434. The chain crosses the membrane as a helical span at residues Trp-447–Ile-467. The Cytoplasmic segment spans residues Glu-468–Thr-479. Residues Ala-480–Leu-500 form a helical membrane-spanning segment. The Extracellular segment spans residues Cys-501 to Arg-503. Residues Phe-504–Thr-524 form a helical membrane-spanning segment. The Cytoplasmic portion of the chain corresponds to Val-525–Arg-530. The chain crosses the membrane as a helical span at residues Gly-531–Ala-551. Topologically, residues Gly-552–Ser-558 are extracellular. Residues Met-559 to Pro-579 form a helical membrane-spanning segment. Residues Glu-580 to Pro-642 lie on the Cytoplasmic side of the membrane. Residues Leu-643–Phe-663 form a helical membrane-spanning segment. Topologically, residues Tyr-664–Asn-679 are extracellular. Residues Val-680–Ile-700 traverse the membrane as a helical segment. Residues Asp-701–Lys-706 are Cytoplasmic-facing. A helical membrane pass occupies residues Ile-707–Phe-727. The Extracellular segment spans residues Tyr-728–Cys-746. The helical transmembrane segment at Phe-747–Gly-767 threads the bilayer. Residues Glu-768 to Lys-773 lie on the Cytoplasmic side of the membrane. A helical transmembrane segment spans residues Ile-774–Thr-794. Over Lys-795–His-807 the chain is Extracellular. Residues Gly-808–Val-828 traverse the membrane as a helical segment. At Pro-829 to Met-863 the chain is on the cytoplasmic side. A phosphoserine mark is found at Ser-851 and Ser-852.

The protein belongs to the major facilitator superfamily. Sugar transporter (TC 2.A.1.1) family. Trehalose transporter subfamily.

It localises to the cell membrane. Low-capacity facilitative transporter for trehalose. Does not transport maltose, sucrose or lactose. Mediates the bidirectional transfer of trehalose. Responsible for the transport of trehalose synthesized in the fat body and the incorporation of trehalose into other tissues that require a carbon source, thereby regulating trehalose levels in the hemolymph. This chain is Facilitated trehalose transporter Tret1, found in Drosophila mojavensis (Fruit fly).